A 488-amino-acid polypeptide reads, in one-letter code: C2H2-type transcription factor MSN2 (488 aa).

2 C2H2-type zinc fingers span residues 376–399 (FVCDLCNRRFRRQEHLKRHYRSLH) and 405–427 (FECNECGKKFSRSDNLAQHARTH).

It localises to the nucleus. The protein localises to the cytoplasm. Its function is as follows. Transcription factor that acts as a key downstream transcription factor in the HOG1-MAPK pathway. Plays crucial roles in the regulation of conidiation, virulence and multi-stress responses. Acts as a negative regulator of proteases, lipases, as well as of the red-pigmented oosporein production, and contributes to virulence and growth in response to external pH. Contributes to the ability to infect Rhipicephalus microplus (Acari, Ixodidae) via the cuticle-penetration requiring route involving proteolytic activity at the host cuticle. Does not seem to be involved in subsequent growth and proliferation once the tick cuticle has been breached. The protein is C2H2-type transcription factor MSN2 of Beauveria bassiana (strain ARSEF 2860) (White muscardine disease fungus).